The sequence spans 184 residues: Coordinator of PRMT5 and differentiation stimulator (184 aa).

The residue at position 1 (M1) is an N-acetylmethionine. Residues 1 to 14 (MDLQAAGAQAQGAA) are compositionally biased toward low complexity. The segment at 1 to 136 (MDLQAAGAQA…PYDADDIQES (136 aa)) is disordered. Basic and acidic residues predominate over residues 42–56 (SSQERETEKAMDRLA). Phosphoserine occurs at positions 66 and 75. Residues 78–89 (EGFAMDEEDSDG) are compositionally biased toward acidic residues.

Interacts with PRMT5. Interacts with histone H4; specifically interacts with the N-terminus of histone H4 but not with histone H3. Interacts with CBFB. Found in a complex with PRMT5, RUNX1 and CBFB.

Its subcellular location is the nucleus. Its function is as follows. Histone-binding protein required for histone H4 methyltransferase activity of PRMT5. Specifically required for histone H4 'Arg-3' methylation mediated by PRMT5, but not histone H3 'Arg-8' methylation, suggesting that it modulates the substrate specificity of PRMT5. Specifically interacts with the N-terminus of histone H4 but not with histone H3, suggesting that it acts by promoting the association between histone H4 and PRMT5. Involved in CCNE1 promoter repression. Plays a role in muscle cell differentiation by modulating the recruitment of PRMT5 to the promoter of genes involved in the coordination between cell cycle exit and muscle differentiation. In Homo sapiens (Human), this protein is Coordinator of PRMT5 and differentiation stimulator (COPRS).